A 493-amino-acid chain; its full sequence is Glutamate--tRNA ligase (493 aa).

Residues 10–20 carry the 'HIGH' region motif; sequence PSPTGDPHVGT. The 'KMSKS' region signature appears at 251–255; the sequence is KLSKR. Lysine 254 contacts ATP.

The protein belongs to the class-I aminoacyl-tRNA synthetase family. Glutamate--tRNA ligase type 1 subfamily. Monomer.

The protein localises to the cytoplasm. It carries out the reaction tRNA(Glu) + L-glutamate + ATP = L-glutamyl-tRNA(Glu) + AMP + diphosphate. Catalyzes the attachment of glutamate to tRNA(Glu) in a two-step reaction: glutamate is first activated by ATP to form Glu-AMP and then transferred to the acceptor end of tRNA(Glu). The polypeptide is Glutamate--tRNA ligase (Pseudomonas putida (strain GB-1)).